Here is a 377-residue protein sequence, read N- to C-terminus: N-acetyldiaminopimelate deacetylase (377 aa).

Residue Asp70 is part of the active site. Glu129 (proton acceptor) is an active-site residue.

This sequence belongs to the peptidase M20A family. N-acetyldiaminopimelate deacetylase subfamily.

The catalysed reaction is N-acetyl-(2S,6S)-2,6-diaminopimelate + H2O = (2S,6S)-2,6-diaminopimelate + acetate. Its pathway is amino-acid biosynthesis; L-lysine biosynthesis via DAP pathway; LL-2,6-diaminopimelate from (S)-tetrahydrodipicolinate (acetylase route): step 3/3. Catalyzes the conversion of N-acetyl-diaminopimelate to diaminopimelate and acetate. The sequence is that of N-acetyldiaminopimelate deacetylase from Streptococcus thermophilus (strain CNRZ 1066).